The primary structure comprises 350 residues: MNSTRNIISLVRRYSTSRSVKIASHGSPSTALKIENENITDKISNKDVLVEMLHAPINPADLNIIQGTYGTNVQVGGVAGMEGVGVVKKVGSGVTGLKENDLVVPSMKQHFGSWRSKGVWSEQQLFKVPSDIPTEYLSTISINPTTAYLLLNDFVKLQQGDVIIQNASNSMVGLSVIQLAKARGIKTINVIRDGSEFEDNVQRLKQLGGDIVVSEEYVRTPAFRKLISDLPSPKLALNAVGGQSATELSRILADNGTLVTYGGMSREPVTIPTSQLIFRNIQIRGFWLNKWFEQHTDSEKQSVYDAIFDLIRKKQFKLLIEKHKFSEFDQALLKSQQSGHGRKIVLDLQL.

A mitochondrion-targeting transit peptide spans 1 to 14; the sequence is MNSTRNIISLVRRY. The Proton donor role is filled by Tyr-69. Residues Asn-143, 169–172, 192–194, 261–264, 286–288, and Lys-343 each bind NADP(+); these read NSMV, RDG, YGGM, and FWL.

Belongs to the zinc-containing alcohol dehydrogenase family. Quinone oxidoreductase subfamily. In terms of assembly, homodimer.

Its subcellular location is the mitochondrion. It catalyses the reaction a 2,3-saturated acyl-[ACP] + NADP(+) = a (2E)-enoyl-[ACP] + NADPH + H(+). In terms of biological role, catalyzes the NADPH-dependent reduction of trans-2-enoyl thioesters in mitochondrial fatty acid synthesis (fatty acid synthesis type II). Fatty acid chain elongation in mitochondria uses acyl carrier protein (ACP) as an acyl group carrier, but the enzyme accepts both ACP and CoA thioesters as substrates in vitro. The protein is Enoyl-[acyl-carrier-protein] reductase, mitochondrial (mecr) of Dictyostelium discoideum (Social amoeba).